The chain runs to 103 residues: Large ribosomal subunit protein bL21 (103 aa).

Belongs to the bacterial ribosomal protein bL21 family. Part of the 50S ribosomal subunit. Contacts protein L20.

Its function is as follows. This protein binds to 23S rRNA in the presence of protein L20. This is Large ribosomal subunit protein bL21 from Aeromonas salmonicida (strain A449).